Here is a 375-residue protein sequence, read N- to C-terminus: CC-adding tRNA nucleotidyltransferase (375 aa).

27–30 (GAVR) contributes to the CTP binding site. Aspartate 40 and aspartate 42 together coordinate Mg(2+). Residues 95–96 (RD), asparagine 100, 137–146 (DPLRMLRAPR), and arginine 177 contribute to the CTP site.

It belongs to the tRNA nucleotidyltransferase/poly(A) polymerase family. It depends on Mg(2+) as a cofactor.

The catalysed reaction is a tRNA precursor + 2 CTP = a tRNA with a 3' CC end + 2 diphosphate. In terms of biological role, tRNA nucleotidyltransferase involved in the synthesis of the tRNA CCA terminus. Adds the two cytidine residues to tRNA. In Halalkalibacterium halodurans (strain ATCC BAA-125 / DSM 18197 / FERM 7344 / JCM 9153 / C-125) (Bacillus halodurans), this protein is CC-adding tRNA nucleotidyltransferase.